Reading from the N-terminus, the 79-residue chain is MSGLGTMVLTLLLLVFMVTSHQDGGKKQATQRNAVNIRRRKSITQRTTDEKCNEYCEERDRNCCGKANGEPRCARMCFG.

The first 20 residues, 1-20 (MSGLGTMVLTLLLLVFMVTS), serve as a signal peptide directing secretion. Residues 21–46 (HQDGGKKQATQRNAVNIRRRKSITQR) constitute a propeptide that is removed on maturation. Disulfide bonds link Cys52–Cys64, Cys56–Cys73, and Cys63–Cys77. At Phe78 the chain carries Phenylalanine amide.

This sequence belongs to the conotoxin O3 superfamily. As to expression, expressed by the venom duct.

Its subcellular location is the secreted. The sequence is that of Conotoxin LiCr173 from Conus lividus (Livid cone).